Reading from the N-terminus, the 181-residue chain is Large ribosomal subunit protein uL6 (181 aa).

It belongs to the universal ribosomal protein uL6 family. In terms of assembly, part of the 50S ribosomal subunit.

In terms of biological role, this protein binds to the 23S rRNA, and is important in its secondary structure. It is located near the subunit interface in the base of the L7/L12 stalk, and near the tRNA binding site of the peptidyltransferase center. This is Large ribosomal subunit protein uL6 from Synechococcus sp. (strain JA-2-3B'a(2-13)) (Cyanobacteria bacterium Yellowstone B-Prime).